The following is a 417-amino-acid chain: Gamma-glutamyl phosphate reductase (417 aa).

It belongs to the gamma-glutamyl phosphate reductase family.

The protein resides in the cytoplasm. The catalysed reaction is L-glutamate 5-semialdehyde + phosphate + NADP(+) = L-glutamyl 5-phosphate + NADPH + H(+). The protein operates within amino-acid biosynthesis; L-proline biosynthesis; L-glutamate 5-semialdehyde from L-glutamate: step 2/2. Its function is as follows. Catalyzes the NADPH-dependent reduction of L-glutamate 5-phosphate into L-glutamate 5-semialdehyde and phosphate. The product spontaneously undergoes cyclization to form 1-pyrroline-5-carboxylate. The sequence is that of Gamma-glutamyl phosphate reductase from Escherichia coli O127:H6 (strain E2348/69 / EPEC).